A 127-amino-acid chain; its full sequence is Phosphoribosyl-AMP cyclohydrolase (127 aa).

Position 96 (Asp-96) interacts with Mg(2+). Cys-97 serves as a coordination point for Zn(2+). Residues Asp-98 and Asp-100 each coordinate Mg(2+). Residues Cys-113 and Cys-120 each coordinate Zn(2+).

The protein belongs to the PRA-CH family. As to quaternary structure, homodimer. Requires Mg(2+) as cofactor. The cofactor is Zn(2+).

The protein localises to the cytoplasm. It carries out the reaction 1-(5-phospho-beta-D-ribosyl)-5'-AMP + H2O = 1-(5-phospho-beta-D-ribosyl)-5-[(5-phospho-beta-D-ribosylamino)methylideneamino]imidazole-4-carboxamide. Its pathway is amino-acid biosynthesis; L-histidine biosynthesis; L-histidine from 5-phospho-alpha-D-ribose 1-diphosphate: step 3/9. Its function is as follows. Catalyzes the hydrolysis of the adenine ring of phosphoribosyl-AMP. The polypeptide is Phosphoribosyl-AMP cyclohydrolase (Corynebacterium jeikeium (strain K411)).